The following is a 734-amino-acid chain: Photosystem I P700 chlorophyll a apoprotein A2 (734 aa).

Helical transmembrane passes span 46–69, 135–158, 175–199, 273–291, 330–353, 369–395, 417–439, and 517–535; these read IFAS…FHVA, LYTG…LHLQ, LNHH…HVAI, MAHH…GHMY, IHFQ…QHMY, AALY…IFFI, AIIS…LYVH, and FLVH…LILV. C559 and C568 together coordinate [4Fe-4S] cluster. 2 helical membrane passes run 575 to 596 and 643 to 665; these read AFYL…YWHW and LSVW…MFLI. Positions 654, 662, and 670 each coordinate chlorophyll a. W671 lines the phylloquinone pocket. A helical membrane pass occupies residues 707–727; the sequence is LVGLAHFSVGYIFTYAAFLIA.

Belongs to the PsaA/PsaB family. In terms of assembly, the PsaA/B heterodimer binds the P700 chlorophyll special pair and subsequent electron acceptors. PSI consists of a core antenna complex that captures photons, and an electron transfer chain that converts photonic excitation into a charge separation. The eukaryotic PSI reaction center is composed of at least 11 subunits. P700 is a chlorophyll a/chlorophyll a' dimer, A0 is one or more chlorophyll a, A1 is one or both phylloquinones and FX is a shared 4Fe-4S iron-sulfur center. serves as cofactor.

It localises to the plastid. It is found in the chloroplast thylakoid membrane. The catalysed reaction is reduced [plastocyanin] + hnu + oxidized [2Fe-2S]-[ferredoxin] = oxidized [plastocyanin] + reduced [2Fe-2S]-[ferredoxin]. Its function is as follows. PsaA and PsaB bind P700, the primary electron donor of photosystem I (PSI), as well as the electron acceptors A0, A1 and FX. PSI is a plastocyanin-ferredoxin oxidoreductase, converting photonic excitation into a charge separation, which transfers an electron from the donor P700 chlorophyll pair to the spectroscopically characterized acceptors A0, A1, FX, FA and FB in turn. Oxidized P700 is reduced on the lumenal side of the thylakoid membrane by plastocyanin. The polypeptide is Photosystem I P700 chlorophyll a apoprotein A2 (Helianthus annuus (Common sunflower)).